The sequence spans 280 residues: DegV domain-containing protein SPy_1698/M5005_Spy1391 (280 aa).

In terms of domain architecture, DegV spans 3–280 (WKIVTDSGCD…DGGLLMGYEI (278 aa)). Residues Ser-63 and Ser-91 each coordinate hexadecanoate.

In terms of biological role, may bind long-chain fatty acids, such as palmitate, and may play a role in lipid transport or fatty acid metabolism. This is DegV domain-containing protein SPy_1698/M5005_Spy1391 from Streptococcus pyogenes serotype M1.